Consider the following 117-residue polypeptide: G antigen 12B/C/D/E (117 aa).

Residues M1–C117 are disordered. 2 stretches are compositionally biased toward acidic residues: residues F32–E45 and E87–E96. Basic and acidic residues predominate over residues E103 to C117.

Belongs to the GAGE family.

The polypeptide is G antigen 12B/C/D/E (GAGE12B) (Homo sapiens (Human)).